Consider the following 137-residue polypeptide: BolA-like protein 1 (137 aa).

Serine 81 is modified (phosphoserine). The disordered stretch occupies residues 114-137; the sequence is WRENSQLDTSPPCLGGNKKTLGTP.

The protein belongs to the BolA/IbaG family. Interacts with GLRX5. Widely expressed.

The protein localises to the mitochondrion. Acts as a mitochondrial iron-sulfur (Fe-S) cluster assembly factor that facilitates (Fe-S) cluster insertion into a subset of mitochondrial proteins. Probably acts together with the monothiol glutaredoxin GLRX5. May protect cells against oxidative stress. The chain is BolA-like protein 1 from Homo sapiens (Human).